We begin with the raw amino-acid sequence, 191 residues long: Probable calcium-binding protein CML8 (191 aa).

Residues 1–41 (MASKYRGYYHDEASSAAGGGGGGGGGDGYRREKQVRKKRLT) are disordered. Residues 17–27 (AGGGGGGGGGD) are compositionally biased toward gly residues. EF-hand domains lie at 43–78 (QKRK…LGFE), 79–114 (MTPE…KMGE), 116–151 (DARE…TGEP), and 152–187 (FTLD…IGFG). Ca(2+) contacts are provided by Asp-56, Asp-58, Ser-60, Thr-62, Glu-67, Asp-92, Asp-94, Ser-96, Thr-98, Glu-103, Asp-129, Asp-131, Asn-133, Lys-135, Asp-140, Asp-165, Asn-167, Asp-169, Glu-171, and Glu-176.

Potential calcium sensor. This is Probable calcium-binding protein CML8 (CML8) from Oryza sativa subsp. japonica (Rice).